The primary structure comprises 295 residues: Sulfotransferase 1E1 (295 aa).

A 3'-phosphoadenylyl sulfate-binding site is contributed by 48 to 53 (KSGTTW). Residue 106-108 (KSH) participates in substrate binding. H108 acts as the Proton acceptor in catalysis. R130, S138, and Y193 together coordinate 3'-phosphoadenylyl sulfate. Residues S216 and S228 each carry the phosphoserine; by PKA modification. Residues 227 to 232 (TSFQEM) and 257 to 259 (RKG) each bind 3'-phosphoadenylyl sulfate.

This sequence belongs to the sulfotransferase 1 family. In terms of assembly, homodimer.

It is found in the cytoplasm. The protein localises to the cytosol. The catalysed reaction is estrone + 3'-phosphoadenylyl sulfate = estrone 3-sulfate + adenosine 3',5'-bisphosphate + H(+). The enzyme catalyses (24S)-hydroxycholesterol + 3'-phosphoadenylyl sulfate = (24S)-hydroxycholesterol 3-sulfate + adenosine 3',5'-bisphosphate + H(+). It catalyses the reaction 17beta-estradiol + 3'-phosphoadenylyl sulfate = 17beta-estradiol 3-sulfate + adenosine 3',5'-bisphosphate + H(+). It carries out the reaction 3beta-hydroxyandrost-5-en-17-one + 3'-phosphoadenylyl sulfate = dehydroepiandrosterone 3-sulfate + adenosine 3',5'-bisphosphate + H(+). The catalysed reaction is 4-ethylphenol + 3'-phosphoadenylyl sulfate = 4-ethylphenyl sulfate + adenosine 3',5'-bisphosphate + H(+). Inhibited by estradiol. Functionally, sulfotransferase that utilizes 3'-phospho-5'-adenylyl sulfate (PAPS) as sulfonate donor to catalyze the sulfate conjugation of estradiol and estrone. Is a key enzyme in estrogen homeostasis, the sulfation of estrogens leads to their inactivation. Also sulfates dehydroepiandrosterone (DHEA), pregnenolone, (24S)-hydroxycholesterol and xenobiotic compounds like ethinylestradiol, equalenin, diethyl stilbesterol and 1-naphthol at significantly lower efficiency. Does not sulfonate cortisol, testosterone and dopamine. May play a role in gut microbiota-host metabolic interaction. O-sulfonates 4-ethylphenol (4-EP), a dietary tyrosine-derived metabolite produced by gut bacteria. The product 4-EPS crosses the blood-brain barrier and may negatively regulate oligodendrocyte maturation and myelination, affecting the functional connectivity of different brain regions associated with the limbic system. The protein is Sulfotransferase 1E1 (SULT1E1) of Bos taurus (Bovine).